The primary structure comprises 292 residues: Protease HtpX homolog (292 aa).

Transmembrane regions (helical) follow at residues 4-24 (IALFLLTNVAVVVVLGIVASL) and 38-58 (LGALLGFAFIMGFGGAIISLL). His144 is a Zn(2+) binding site. The active site involves Glu145. Zn(2+) is bound at residue His148. 2 helical membrane passes run 152-172 (GDMVTMALIQGVMNTFVVFLS) and 199-219 (ITTIVLDIVLGFLAAIIVAWF). Glu224 contributes to the Zn(2+) binding site.

This sequence belongs to the peptidase M48B family. The cofactor is Zn(2+).

It localises to the cell inner membrane. The sequence is that of Protease HtpX homolog from Acidovorax ebreus (strain TPSY) (Diaphorobacter sp. (strain TPSY)).